We begin with the raw amino-acid sequence, 519 residues long: MRFGVLISVFVAIVSALPLQEGPLNKRAYPSFEAYSNYKVDRTDLETFLDKQKDVSLYYLLQNIAYPEGQFNDGVPGTVIASPSTSNPDYYYQWTRDSAITFLTVLSELEDNNFNTTLAKAVEYYINTSYNLQRTSNPSGSFDDENHKGLGEPKFNTDGSAYTGAWGRPQNDGPALRAYAISRYLNDVNSLNKGKLVLTDSGDINFSSTEDIYKNIIKPDLEYVIGYWDSTGFDLWEENQGRHFFTSLVQQKALAYAVDIAKSFDDGDFANTLSSTASTLESYLSGSDGGFVNTDVNHIVENPDLLQQNSRQGLDSATYIGPLLTHDIGESSSTPFDVDNEYVLQSYYLLLEDNKDRYSVNSAYSAGAAIGRYPEDVYNGDGSSEGNPWFLATAYAAQVPYKLVYDAKSASNDITINKINYDFFNKYIVDLSTINSGYQSSDSVTIKSGSDEFNTVADNLVTFGDSFLQVILDHINDDGSLNEQLNRNTGYSTSAYSLTWSSGALLEAIRLRNKVKALA.

The signal sequence occupies residues M1–R27. N115 and N127 each carry an N-linked (GlcNAc...) asparagine glycan. W166 is a substrate binding site. N205 carries N-linked (GlcNAc...) asparagine glycosylation. Residue D234 is the Proton acceptor of the active site. Catalysis depends on E237, which acts as the Proton donor.

It belongs to the glycosyl hydrolase 15 family.

It catalyses the reaction Hydrolysis of terminal (1-&gt;4)-linked alpha-D-glucose residues successively from non-reducing ends of the chains with release of beta-D-glucose.. The polypeptide is Glucoamylase GLA1 (GLA1) (Saccharomycopsis fibuligera (Yeast)).